Consider the following 497-residue polypeptide: Galactose-1-phosphate uridylyltransferase (497 aa).

Belongs to the galactose-1-phosphate uridylyltransferase type 2 family.

It localises to the cytoplasm. The catalysed reaction is alpha-D-galactose 1-phosphate + UDP-alpha-D-glucose = alpha-D-glucose 1-phosphate + UDP-alpha-D-galactose. The protein operates within carbohydrate metabolism; galactose metabolism. This chain is Galactose-1-phosphate uridylyltransferase, found in Clostridium acetobutylicum (strain ATCC 824 / DSM 792 / JCM 1419 / IAM 19013 / LMG 5710 / NBRC 13948 / NRRL B-527 / VKM B-1787 / 2291 / W).